The following is a 378-amino-acid chain: Erythronate-4-phosphate dehydrogenase (378 aa).

Substrate is bound by residues Ser-45 and Thr-66. Positions 146 and 175 each coordinate NAD(+). Residue Arg-208 is part of the active site. Asp-232 lines the NAD(+) pocket. Glu-237 is a catalytic residue. His-254 serves as the catalytic Proton donor. Gly-257 is an NAD(+) binding site. Tyr-258 contributes to the substrate binding site.

It belongs to the D-isomer specific 2-hydroxyacid dehydrogenase family. PdxB subfamily. As to quaternary structure, homodimer.

Its subcellular location is the cytoplasm. The enzyme catalyses 4-phospho-D-erythronate + NAD(+) = (R)-3-hydroxy-2-oxo-4-phosphooxybutanoate + NADH + H(+). It participates in cofactor biosynthesis; pyridoxine 5'-phosphate biosynthesis; pyridoxine 5'-phosphate from D-erythrose 4-phosphate: step 2/5. Catalyzes the oxidation of erythronate-4-phosphate to 3-hydroxy-2-oxo-4-phosphonooxybutanoate. The sequence is that of Erythronate-4-phosphate dehydrogenase from Shigella dysenteriae serotype 1 (strain Sd197).